We begin with the raw amino-acid sequence, 308 residues long: MQKVVAIVGPTAVGKTSLAIEIAKKLDGEIVSGDSMQIYKEVAIGTAKASREEQAEVKHYLVDAHSVFEDFSVKNFVDEARSAIGEIAGKGKLPIIAGGTGFYVNALLNDMQLGDKEEEAASVDPEWEVFLAANGPQALWEELNKKDPEAAKKIPVANSRRSLRALSVISRTGGLFSKQQAEIKPRYDYLIIGLNSDREAIYQRINQRVDLMMEAGLLEEARFVYEHRAGEHQVLQAIGYKEFFPYFAGEASLETCVMALKTASRRYAKRQLTYFRNKLPVEWYDPLTDPNCANRIAVRIEEWMKEEK.

9 to 16 (GPTAVGKT) serves as a coordination point for ATP. 11 to 16 (TAVGKT) is a binding site for substrate. The interaction with substrate tRNA stretch occupies residues 34–37 (DSMQ).

This sequence belongs to the IPP transferase family. Monomer. It depends on Mg(2+) as a cofactor.

The enzyme catalyses adenosine(37) in tRNA + dimethylallyl diphosphate = N(6)-dimethylallyladenosine(37) in tRNA + diphosphate. In terms of biological role, catalyzes the transfer of a dimethylallyl group onto the adenine at position 37 in tRNAs that read codons beginning with uridine, leading to the formation of N6-(dimethylallyl)adenosine (i(6)A). The polypeptide is tRNA dimethylallyltransferase (Lactobacillus delbrueckii subsp. bulgaricus (strain ATCC BAA-365 / Lb-18)).